The chain runs to 276 residues: NAD(+)--dinitrogen-reductase ADP-D-ribosyltransferase (276 aa).

As to quaternary structure, monomer.

The catalysed reaction is L-arginyl-[dinitrogen reductase] + NAD(+) = N(omega)-alpha-(ADP-D-ribosyl)-L-arginyl-[dinitrogen reductase] + nicotinamide + H(+). Its function is as follows. Involved in the regulation of the nitrogen fixation activity by the reversible ADP-ribosylation of the dinitrogenase reductase component of the nitrogenase enzyme complex. The ADP-ribosyltransferase (DraT) transfers the ADP-ribose group from NAD to dinitrogenase reductase. The ADP-ribose group is removed through the action of the ADP-ribosylglycohydrolase (DraG). This is NAD(+)--dinitrogen-reductase ADP-D-ribosyltransferase (draT) from Rhodospirillum rubrum.